Here is a 309-residue protein sequence, read N- to C-terminus: Porphobilinogen deaminase (309 aa).

Position 241 is an S-(dipyrrolylmethanemethyl)cysteine (Cys-241).

Belongs to the HMBS family. In terms of assembly, monomer. It depends on dipyrromethane as a cofactor.

It catalyses the reaction 4 porphobilinogen + H2O = hydroxymethylbilane + 4 NH4(+). It functions in the pathway porphyrin-containing compound metabolism; protoporphyrin-IX biosynthesis; coproporphyrinogen-III from 5-aminolevulinate: step 2/4. Its function is as follows. Tetrapolymerization of the monopyrrole PBG into the hydroxymethylbilane pre-uroporphyrinogen in several discrete steps. The protein is Porphobilinogen deaminase of Bacillus cereus (strain ZK / E33L).